A 310-amino-acid polypeptide reads, in one-letter code: Prostate androgen-regulated mucin-like protein 1 homolog (310 aa).

A signal peptide spans 1-20 (MVYKTLFALCILTAGWRVQS). Over 21–258 (LPTSAPLSVS…EVEHALSSGS (238 aa)) the chain is Extracellular. Residues 40–74 (TIWTSSPQNTDADTASPSNGTHNNSVLPVTASAPT) show a composition bias toward polar residues. Residues 40-224 (TIWTSSPQNT…VPQEKTPPTT (185 aa)) are disordered. N-linked (GlcNAc...) asparagine glycosylation is found at Asn58, Asn62, and Asn80. Polar residues predominate over residues 92-103 (SPGSNWEGTNTD). Positions 150–209 (SPQAPASSPSSLSTSPPEVFSVSVTTNHSSTVTSTQPTGAPTAPESPTEESSSDHTPTSH) are enriched in low complexity. Asn176 carries an N-linked (GlcNAc...) asparagine glycan. The helical transmembrane segment at 259–279 (IAAITVTVIAVVLLVFGVAAY) threads the bilayer. Residues 280 to 310 (LKIRHSSYGRLLDDHDYGSWGNYNNPLYDDS) lie on the Cytoplasmic side of the membrane. Ser298 carries the phosphoserine modification.

It belongs to the PARM family. Post-translationally, highly N-glycosylated and O-glycosylated.

It is found in the cell membrane. Its subcellular location is the golgi apparatus membrane. The protein resides in the endosome membrane. In terms of biological role, may regulate TLP1 expression and telomerase activity, thus enabling certain prostatic cells to resist apoptosis. This Pongo abelii (Sumatran orangutan) protein is Prostate androgen-regulated mucin-like protein 1 homolog (PARM1).